We begin with the raw amino-acid sequence, 89 residues long: Small ribosomal subunit protein uS15 (89 aa).

This sequence belongs to the universal ribosomal protein uS15 family. As to quaternary structure, part of the 30S ribosomal subunit. Forms a bridge to the 50S subunit in the 70S ribosome, contacting the 23S rRNA.

One of the primary rRNA binding proteins, it binds directly to 16S rRNA where it helps nucleate assembly of the platform of the 30S subunit by binding and bridging several RNA helices of the 16S rRNA. Functionally, forms an intersubunit bridge (bridge B4) with the 23S rRNA of the 50S subunit in the ribosome. The sequence is that of Small ribosomal subunit protein uS15 from Hamiltonella defensa subsp. Acyrthosiphon pisum (strain 5AT).